Consider the following 1792-residue polypeptide: Non-reducing polyketide synthase aptA (1792 aa).

An N-terminal acylcarrier protein transacylase domain (SAT) region spans residues 1–395; it reads MKDNTHSTTL…PRSFAHSKLA (395 aa). The Ketosynthase family 3 (KS3) domain maps to 391–824; sequence HSKLAVVGMA…GGNTTVLLED (434 aa). Catalysis depends on for beta-ketoacyl synthase activity residues Cys-564, His-699, and His-742. The interval 926-1243 is malonyl-CoA:ACP transacylase (MAT) domain; it reads VFAFTGQGAF…NLVALHLAGC (318 aa). The product template (PT) domain stretch occupies residues 1308–1625; it reads TSLIHEIIEE…PRLLMDRFFS (318 aa). Residues 1312–1447 are N-terminal hotdog fold; sequence HEIIEETIGE…GSVRFEADAE (136 aa). Residues 1312–1621 enclose the PKS/mFAS DH domain; it reads HEIIEETIGE…FRRVPRLLMD (310 aa). His-1344 functions as the Proton acceptor; for dehydratase activity in the catalytic mechanism. The interval 1475–1621 is C-terminal hotdog fold; it reads QASQLSKALS…FRRVPRLLMD (147 aa). The Proton donor; for dehydratase activity role is filled by Asp-1533. Residues 1634–1649 are compositionally biased toward low complexity; it reads VAASASSAPKTATKHA. The disordered stretch occupies residues 1634-1716; that stretch reads VAASASSAPK…GPNGTTSQPE (83 aa). Residues 1664–1684 are compositionally biased toward polar residues; that stretch reads TPSSLPTVQAQNTSPPQQVTP. Residues 1694 to 1705 show a composition bias toward basic and acidic residues; it reads TPEEEKPGKADA. One can recognise a Carrier domain in the interval 1715-1792; the sequence is PEATGVVGQC…DMMDWLEQYC (78 aa). Ser-1752 carries the O-(pantetheine 4'-phosphoryl)serine modification.

Pantetheine 4'-phosphate serves as cofactor.

The enzyme catalyses holo-[ACP] + 8 malonyl-CoA + acetyl-CoA + 8 H(+) = 3,6,8,9-tetrahydroxy-1-oxo-3-(2-oxopropyl)-1,2,3,4-tetrahydroanthracene-2-carboxyl-[ACP] + 8 CO2 + 9 CoA + 2 H2O. It functions in the pathway secondary metabolite biosynthesis. Non-reducing polyketide synthase (NRPKS); part of the gene cluster that mediates the biosynthesis of asperthecin, an anthraquinone pigment. Catalyzes the formation of the aromatic polyketide from acetyl coenzyme A and seven malonyl coenzyme A molecules. Through its product template (PT) domain, catalyzes the cyclization of the polyketide backbone via C6-C11 aldolcondensation. Polyketide is subsequently hydrolyzed from the NRPKS by the action of the hydrolase aptB into endocrocin-9-anthrone. Endocrocin-9-anthrone is then oxidized into endocrocin by aptC. Endocrocin is likely to decarboxylate spontaneously to form emodin which explains why there is no decarboxylase in the asperthecin biosynthesis cluster. Finally, aptC or another endogenous oxygenase catalyzes additional oxidation steps to form asperthecin. The sequence is that of Non-reducing polyketide synthase aptA from Emericella nidulans (strain FGSC A4 / ATCC 38163 / CBS 112.46 / NRRL 194 / M139) (Aspergillus nidulans).